The primary structure comprises 225 residues: Translation initiation factor 6 (225 aa).

This sequence belongs to the eIF-6 family.

Functionally, binds to the 50S ribosomal subunit and prevents its association with the 30S ribosomal subunit to form the 70S initiation complex. The chain is Translation initiation factor 6 from Hyperthermus butylicus (strain DSM 5456 / JCM 9403 / PLM1-5).